The sequence spans 72 residues: Cytochrome c oxidase copper chaperone 2 (72 aa).

The Cu cation site is built by Cys-32 and Cys-33. A CHCH domain is found at 32 to 72 (CCACPDTKKLRDECIVEHGESACTKWIEAHILCLRSEGFKV). 2 short sequence motifs (cx9C motif) span residues 35 to 45 (CPDTKKLRDEC) and 54 to 64 (CTKWIEAHILC). 2 disulfides stabilise this stretch: Cys-35–Cys-64 and Cys-45–Cys-54.

This sequence belongs to the COX17 family.

The protein resides in the mitochondrion intermembrane space. Copper chaperone for cytochrome c oxidase (COX). Binds 2 copper ions and delivers them to the Cu(A) site of COX. This Arabidopsis thaliana (Mouse-ear cress) protein is Cytochrome c oxidase copper chaperone 2 (COX17-2).